Reading from the N-terminus, the 476-residue chain is Small ribosomal subunit protein mS29 (476 aa).

The transit peptide at 1-54 (MLPKFRSRSSIIKNTERISNILSGGKLTVCGSKLGGLYTFEKCTFNKYYSSSQY) directs the protein to the mitochondrion. A disordered region spans residues 58–97 (GRPVGGNIHSSSNQQRQKNSEAPRINEIPPSTSSVEKSTT). Composition is skewed to polar residues over residues 65-74 (IHSSSNQQRQ) and 86-97 (PPSTSSVEKSTT). ATP is bound at residue 200–207 (GAPGSGRS).

The protein belongs to the mitochondrion-specific ribosomal protein mS29 family. Component of the mitochondrial small ribosomal subunit (mt-SSU). Mature yeast 74S mitochondrial ribosomes consist of a small (37S) and a large (54S) subunit. The 37S small subunit contains a 15S ribosomal RNA (15S mt-rRNA) and at least 32 different proteins. The 54S large subunit contains a 21S rRNA (21S mt-rRNA) and at least 45 different proteins.

It is found in the mitochondrion. In terms of biological role, component of the mitochondrial ribosome (mitoribosome), a dedicated translation machinery responsible for the synthesis of mitochondrial genome-encoded proteins, including at least some of the essential transmembrane subunits of the mitochondrial respiratory chain. The mitoribosomes are attached to the mitochondrial inner membrane and translation products are cotranslationally integrated into the membrane. mS29 binds GTP and is probably an active GTPase. GTP hydrolysis may be linked to subunit association. mS29 also has an extraribosomal function, being required for maintenance of mitochondrial DNA. The sequence is that of Small ribosomal subunit protein mS29 (rsm23) from Schizosaccharomyces pombe (strain 972 / ATCC 24843) (Fission yeast).